Reading from the N-terminus, the 510-residue chain is Bifunctional purine biosynthesis protein PurH (510 aa).

Residues 1–142 enclose the MGS-like domain; the sequence is MRALLSVSDK…KNYKDVMVLC (142 aa).

It belongs to the PurH family.

It carries out the reaction (6R)-10-formyltetrahydrofolate + 5-amino-1-(5-phospho-beta-D-ribosyl)imidazole-4-carboxamide = 5-formamido-1-(5-phospho-D-ribosyl)imidazole-4-carboxamide + (6S)-5,6,7,8-tetrahydrofolate. The catalysed reaction is IMP + H2O = 5-formamido-1-(5-phospho-D-ribosyl)imidazole-4-carboxamide. It participates in purine metabolism; IMP biosynthesis via de novo pathway; 5-formamido-1-(5-phospho-D-ribosyl)imidazole-4-carboxamide from 5-amino-1-(5-phospho-D-ribosyl)imidazole-4-carboxamide (10-formyl THF route): step 1/1. The protein operates within purine metabolism; IMP biosynthesis via de novo pathway; IMP from 5-formamido-1-(5-phospho-D-ribosyl)imidazole-4-carboxamide: step 1/1. The protein is Bifunctional purine biosynthesis protein PurH of Campylobacter jejuni subsp. doylei (strain ATCC BAA-1458 / RM4099 / 269.97).